Consider the following 205-residue polypeptide: Holliday junction branch migration complex subunit RuvA (205 aa).

The domain I stretch occupies residues 1–64 (MIAHLRGELV…EDALTLYGFL (64 aa)). The tract at residues 65–143 (TQAEYDLFEL…AVPAGGGGVP (79 aa)) is domain II. The flexible linker stretch occupies residues 144 to 153 (DGLPVAVAPA). The segment at 153-205 (AGDAWAEASEALIALGYSRGEAAAALARVRAEAGEAPSVETLVRLALKQLYRG) is domain III.

The protein belongs to the RuvA family. In terms of assembly, homotetramer. Forms an RuvA(8)-RuvB(12)-Holliday junction (HJ) complex. HJ DNA is sandwiched between 2 RuvA tetramers; dsDNA enters through RuvA and exits via RuvB. An RuvB hexamer assembles on each DNA strand where it exits the tetramer. Each RuvB hexamer is contacted by two RuvA subunits (via domain III) on 2 adjacent RuvB subunits; this complex drives branch migration. In the full resolvosome a probable DNA-RuvA(4)-RuvB(12)-RuvC(2) complex forms which resolves the HJ.

It localises to the cytoplasm. The RuvA-RuvB-RuvC complex processes Holliday junction (HJ) DNA during genetic recombination and DNA repair, while the RuvA-RuvB complex plays an important role in the rescue of blocked DNA replication forks via replication fork reversal (RFR). RuvA specifically binds to HJ cruciform DNA, conferring on it an open structure. The RuvB hexamer acts as an ATP-dependent pump, pulling dsDNA into and through the RuvAB complex. HJ branch migration allows RuvC to scan DNA until it finds its consensus sequence, where it cleaves and resolves the cruciform DNA. In Symbiobacterium thermophilum (strain DSM 24528 / JCM 14929 / IAM 14863 / T), this protein is Holliday junction branch migration complex subunit RuvA.